We begin with the raw amino-acid sequence, 295 residues long: GATA transcription factor 18 (295 aa).

The GATA-type zinc-finger motif lies at 148-202 (SLLARRCANCDTTSTPLWRNGPRGPKSLCNACGIRFKKEERRTTAATGNTVVGAA).

This sequence belongs to the type IV zinc-finger family. Class B subfamily. In terms of assembly, homodimer. Forms heterodimers with GATA19, GATA22 and GATA21. Interacts with JAG. Binds to AGO10/PNH. As to expression, expressed in vegetative and inflorescence shoot apical meristems (SAMs), axillary (SAMs), floral meristems, developing ovules and stamens, vascular tissues, and in the embryo.

Its subcellular location is the nucleus. Transcriptional factor that specifically binds 5'-GATA-3' or 5'-GAT-3' motifs within gene promoters (including its own promoter and GATA21 promoter), thus regulating the expression of genes mostly involved in hormone responses and floral organ specification (including genes regulating hormones responses). Regulates both flower and shoot apical meristem (SAM) development, especially for establishing organ boundaries in shoots and flowers, probably by controlling the number and position of WUS-expressing cells. Coregulates, with AGO10/PNH, the shoot apical meristem (SAM) organization. Regulates floral organ development via the promotion of JAG and NPR5/BOP2 expression. Modulates cytokinin homeostasis in organ boundaries by regulating CKX3 expression. Involved in cell proliferation and differentiation. Required to position the inductive proembryo boundary via the regulation of gene expression and for early embryonic development. Together with GIF1/AN3, mediates cotyledon identity by preventing ectopic root formation through the repression of PLT1 expression. The sequence is that of GATA transcription factor 18 from Arabidopsis thaliana (Mouse-ear cress).